The chain runs to 941 residues: Probable respiratory burst oxidase homolog protein I (941 aa).

Over 1-374 (MSMSFSGGTH…LYSLQDNWKR (374 aa)) the chain is Cytoplasmic. Disordered stretches follow at residues 29–48 (PSLP…SGEE) and 103–166 (ERLT…SGTE). Positions 36–45 (SPSPSSSSSS) are enriched in low complexity. Residues 103–117 (ERLTAGTNSKQQIQK) show a composition bias toward polar residues. 2 EF-hand-like regions span residues 196 to 204 (SKDGYLFKS) and 232 to 243 (RRIMVDKINLQE). The EF-hand domain occupies 254-289 (ESFDSRLQIFFNMVKNGDGRITENEVKEIIILSASA). The Ca(2+) site is built by N269, D271, R273, and E278. S346 and S350 each carry phosphoserine. A helical membrane pass occupies residues 375–395 (IWVLTLWFVIMAWLFMWKCYQ). Topologically, residues 396-407 (YKHKDAFHVMGY) are extracellular. Residues 408 to 428 (CLVMAKGAAETLKFNMALILL) form a helical membrane-spanning segment. Residues 413 to 570 (KGAAETLKFN…LLLTVYVLLV (158 aa)) form the Ferric oxidoreductase domain. The Cytoplasmic segment spans residues 429 to 514 (PVCRNTITYL…YFGLVNTPVG (86 aa)). Residues 515–535 (ITGIIMVAFMLIAFTLASRRC) traverse the membrane as a helical segment. The Extracellular portion of the chain corresponds to 536–557 (RRNLTKLPKPFDKLTGYNAFWY). A helical membrane pass occupies residues 558-578 (SHHLLLTVYVLLVIHGVSLYL). Topologically, residues 579-586 (EHKWYRKT) are cytoplasmic. A helical membrane pass occupies residues 587 to 604 (VWMYLAVPVLLYVGERIF). At 605 to 731 (RFFRSRLYTV…PYGAPAQDHW (127 aa)) the chain is on the extracellular side. Residues 609–729 (SRLYTVEICK…DGPYGAPAQD (121 aa)) form the FAD-binding FR-type domain. Residues 732–752 (KYDVVLLVGLGIGATPFVSIL) form a helical membrane-spanning segment. Residues 753–941 (RDLLNNIIKQ…TRFDFHKEQF (189 aa)) are Cytoplasmic-facing.

Belongs to the RBOH (TC 5.B.1.3) family. As to quaternary structure, monomer and homodimer.

Its subcellular location is the membrane. Functionally, calcium-dependent NADPH oxidase that generates superoxide. This chain is Probable respiratory burst oxidase homolog protein I (RBOHI), found in Arabidopsis thaliana (Mouse-ear cress).